The sequence spans 491 residues: Aspartyl/glutamyl-tRNA(Asn/Gln) amidotransferase subunit B (491 aa).

Belongs to the GatB/GatE family. GatB subfamily. In terms of assembly, heterotrimer of A, B and C subunits.

It catalyses the reaction L-glutamyl-tRNA(Gln) + L-glutamine + ATP + H2O = L-glutaminyl-tRNA(Gln) + L-glutamate + ADP + phosphate + H(+). The catalysed reaction is L-aspartyl-tRNA(Asn) + L-glutamine + ATP + H2O = L-asparaginyl-tRNA(Asn) + L-glutamate + ADP + phosphate + 2 H(+). Its function is as follows. Allows the formation of correctly charged Asn-tRNA(Asn) or Gln-tRNA(Gln) through the transamidation of misacylated Asp-tRNA(Asn) or Glu-tRNA(Gln) in organisms which lack either or both of asparaginyl-tRNA or glutaminyl-tRNA synthetases. The reaction takes place in the presence of glutamine and ATP through an activated phospho-Asp-tRNA(Asn) or phospho-Glu-tRNA(Gln). In Burkholderia lata (strain ATCC 17760 / DSM 23089 / LMG 22485 / NCIMB 9086 / R18194 / 383), this protein is Aspartyl/glutamyl-tRNA(Asn/Gln) amidotransferase subunit B.